The sequence spans 348 residues: MKIIGIESSCDETGVAVYDTALSGFAALRAHSVYSQVALHAEYGGVVPELASRDHVRKLLPLLRQTLAEAKLSVEELDGVAYTAGPGLVGALLVGAGVARALAWALEVPAIGVHHMEGHLLSPLLEDDPPEVPFVALLVSGGHTQLVAVDAIGDYRLLGETLDDAAGEAFDKVAKLMGLPYPGGPQLAALAEQGIPGRFCFTRPMVDRPGLDFSFSGLKTQVLLAWRNSDQSDAIRVDVARGFEDAVVDTLAIKCERALDTVACQTLVVAGGVGANKCLRARLQAMCRQRGGRACFPRPALCTDNGAMIAFAGALRLQAGQQSDIAVRVTPRWDMAALPPLVSRSCRR.

2 residues coordinate Fe cation: His-115 and His-119. Substrate-binding positions include 138-142 (LVSGG), Asp-171, Gly-184, and Asn-276. Asp-304 contacts Fe cation.

Belongs to the KAE1 / TsaD family. Requires Fe(2+) as cofactor.

It localises to the cytoplasm. The enzyme catalyses L-threonylcarbamoyladenylate + adenosine(37) in tRNA = N(6)-L-threonylcarbamoyladenosine(37) in tRNA + AMP + H(+). Functionally, required for the formation of a threonylcarbamoyl group on adenosine at position 37 (t(6)A37) in tRNAs that read codons beginning with adenine. Is involved in the transfer of the threonylcarbamoyl moiety of threonylcarbamoyl-AMP (TC-AMP) to the N6 group of A37, together with TsaE and TsaB. TsaD likely plays a direct catalytic role in this reaction. The protein is tRNA N6-adenosine threonylcarbamoyltransferase of Xylella fastidiosa (strain 9a5c).